A 372-amino-acid chain; its full sequence is MALKFHLIHQSKKSQARVGQIETSHGVIDTPAFVPVATHGALKGVIDHSDIPLLFCNTYHLLLHPGPEAVAKLGGLHQFMGRQAPIITDSGGFQIFSLAYGSVAEEIKSCGKKKGMSSLVKITDEGAWFKSYRDGRKLFLSPELSVQAQKDLGADIIIPLDELLPFHTDQEYFLTSCSRTYVWEKRSLEYHRKDPRHQSMYGVIHGGLDPEQRRIGVRFVEDEPFDGSAIGGSLGRNLQEMSEVVKITTSFLSKERPVHLLGIGDLPSIYAMVGFGIDSFDSSYPTKAARHGLILSKAGPIKIGQQKYSQDSSTIDPSCSCLTCLSGISRAYLRHLFKVREPNAAIWASIHNLHHMQQVMKEIREAILKDEI.

Asp-89 (proton acceptor) is an active-site residue. Substrate-binding positions include 89–93 (DSGGF), Asp-161, and Gly-232. The interval 262–268 (GIGDLPS) is RNA binding. The active-site Nucleophile is the Asp-281. The tract at residues 286-290 (TKAAR) is RNA binding; important for wobble base 34 recognition. Zn(2+) contacts are provided by Cys-319, Cys-321, Cys-324, and His-351.

Belongs to the queuine tRNA-ribosyltransferase family. Homodimer. Within each dimer, one monomer is responsible for RNA recognition and catalysis, while the other monomer binds to the replacement base PreQ1. It depends on Zn(2+) as a cofactor.

The catalysed reaction is 7-aminomethyl-7-carbaguanine + guanosine(34) in tRNA = 7-aminomethyl-7-carbaguanosine(34) in tRNA + guanine. It functions in the pathway tRNA modification; tRNA-queuosine biosynthesis. Catalyzes the base-exchange of a guanine (G) residue with the queuine precursor 7-aminomethyl-7-deazaguanine (PreQ1) at position 34 (anticodon wobble position) in tRNAs with GU(N) anticodons (tRNA-Asp, -Asn, -His and -Tyr). Catalysis occurs through a double-displacement mechanism. The nucleophile active site attacks the C1' of nucleotide 34 to detach the guanine base from the RNA, forming a covalent enzyme-RNA intermediate. The proton acceptor active site deprotonates the incoming PreQ1, allowing a nucleophilic attack on the C1' of the ribose to form the product. After dissociation, two additional enzymatic reactions on the tRNA convert PreQ1 to queuine (Q), resulting in the hypermodified nucleoside queuosine (7-(((4,5-cis-dihydroxy-2-cyclopenten-1-yl)amino)methyl)-7-deazaguanosine). This Chlamydia pneumoniae (Chlamydophila pneumoniae) protein is Queuine tRNA-ribosyltransferase.